We begin with the raw amino-acid sequence, 410 residues long: MYGHLSLSTLSLLAVVAAAPFHESWLQPRDSDVSQLFRRGAPDPKASDYLSYYPSPGSTPNVSTIPQAWLDKLATVQLPNVSVATANDGRPTYPNNENDGDSEICSFTDQCYVEDDLYSPPGEKVWALSFDDGPTDVSPALYDYLAQNNISSSATHFMIGGNIITSPQSVLIAIEAGGHLAVHTWSHPYMTTLTNEQVVAELGWTMQALSDLNGGRIPLYWRPPYGDVDNRVRAIAKGVFGLVTVLWDSDTNDWAISDQPDQYSVASVEAYFDTLVTGNRTQGLLLLEHELDNNTVEVFETEYPKAVANGWSVKNVADAFSMKWYLNSGKGNDDVVTTMSVAGTLTTAKPTHTSTSVASATATSSASVTDSAGVSIASAASSQESSSWPIANRPSLFVIACGLALAAIMV.

An N-terminal signal peptide occupies residues methionine 1–alanine 18. The propeptide occupies alanine 19–arginine 39. N-linked (GlcNAc...) asparagine glycosylation is found at asparagine 61 and asparagine 80. Positions lysine 124–lysine 314 constitute a NodB homology domain. The Proton acceptor role is filled by aspartate 131. Aspartate 131 is a binding site for acetate. Aspartate 132 provides a ligand contact to Co(2+). N-linked (GlcNAc...) asparagine glycosylation is present at asparagine 149. Co(2+)-binding residues include histidine 183 and histidine 187. Tyrosine 225 is a binding site for acetate. A glycan (N-linked (GlcNAc...) asparagine) is linked at asparagine 279. Histidine 289 acts as the Proton donor in catalysis. Asparagine 293 carries an N-linked (GlcNAc...) asparagine glycan. Serine 385 is lipidated: GPI-anchor amidated serine. Positions serine 386–valine 410 are cleaved as a propeptide — removed in mature form.

This sequence belongs to the polysaccharide deacetylase family. The cofactor is Co(2+).

The protein resides in the cell membrane. The catalysed reaction is [(1-&gt;4)-N-acetyl-beta-D-glucosaminyl](n) + n H2O = chitosan + n acetate. Functionally, hydrolyzes the N-acetamido groups of N-acetyl-D-glucosamine residues in chitin to form chitosan and acetate. Chitosan is required to anchor melanin to the cell wall, for maintenance of cell wall integrity, and for proper cytokinesis. Chitosan offers an advantage during infection as it is less readily detected than chitin by host immunosurveillance mechanisms. This Cryptococcus neoformans var. neoformans serotype D (strain B-3501A) (Filobasidiella neoformans) protein is Chitin deacetylase 3.